The chain runs to 300 residues: (R)-3-hydroxydecanoyl-ACP:CoA transacylase (300 aa).

The region spanning 29-253 (TIILVNGSLS…HTIRNAGHFI (225 aa)) is the AB hydrolase-1 domain.

Its pathway is polyester biosynthesis; polyhydroxyalkanoate biosynthesis. Its function is as follows. Catalyzes the transfer of the acyl moiety from in vitro synthesized 3-hydroxydecanoyl-CoA to acyl carrier protein. This chain is (R)-3-hydroxydecanoyl-ACP:CoA transacylase (phaG), found in Pseudomonas aeruginosa (strain ATCC 15692 / DSM 22644 / CIP 104116 / JCM 14847 / LMG 12228 / 1C / PRS 101 / PAO1).